Here is a 412-residue protein sequence, read N- to C-terminus: Phosphoglycerate kinase (412 aa).

Substrate contacts are provided by residues 26–28 (DFN), Arg-42, 65–68 (HLGR), Arg-133, and Arg-166. ATP is bound by residues Lys-217, Gly-308, Glu-339, and 368 to 371 (GGDS).

It belongs to the phosphoglycerate kinase family. As to quaternary structure, monomer.

The protein resides in the cytoplasm. The catalysed reaction is (2R)-3-phosphoglycerate + ATP = (2R)-3-phospho-glyceroyl phosphate + ADP. It functions in the pathway carbohydrate degradation; glycolysis; pyruvate from D-glyceraldehyde 3-phosphate: step 2/5. In Synechococcus sp. (strain JA-3-3Ab) (Cyanobacteria bacterium Yellowstone A-Prime), this protein is Phosphoglycerate kinase.